A 256-amino-acid polypeptide reads, in one-letter code: Small ribosomal subunit protein eS1 (256 aa).

Ala-2 is subject to N-acetylalanine; partial.

This sequence belongs to the eukaryotic ribosomal protein eS1 family. Component of the small ribosomal subunit. Mature ribosomes consist of a small (40S) and a large (60S) subunit. The 40S subunit contains about 33 different proteins and 1 molecule of RNA (18S). The 60S subunit contains about 49 different proteins and 3 molecules of RNA (25S, 5.8S and 5S).

The protein resides in the cytoplasm. The polypeptide is Small ribosomal subunit protein eS1 (Komagataella phaffii (strain GS115 / ATCC 20864) (Yeast)).